The primary structure comprises 362 residues: Protein BIG GRAIN 1-like D (362 aa).

Disordered stretches follow at residues 22-113 (IDPK…TLFH), 132-168 (KFNR…GGRI), and 303-327 (VKTN…ASDS). Residues 23-47 (DPKTQKTQPYVGSVNTTTKKQSIVT) show a composition bias toward polar residues. Basic and acidic residues predominate over residues 50–60 (VPDRKIHRDRF). Low complexity predominate over residues 63–78 (SVSSSSDSNSSIFSSS). Over residues 132–144 (KFNRHDENWENTR) the composition is skewed to basic and acidic residues. Residues 309–324 (EDYEDDDEDDDDDDVA) are compositionally biased toward acidic residues.

Belongs to the BIG GRAIN 1 (BG1) plant protein family.

The protein resides in the cell membrane. Its function is as follows. Involved in auxin transport. Regulator of the auxin signaling pathway. The chain is Protein BIG GRAIN 1-like D from Arabidopsis thaliana (Mouse-ear cress).